The following is a 130-amino-acid chain: L-aspartate semialdehyde sulfurtransferase iron-sulfur subunit (130 aa).

4Fe-4S ferredoxin-type domains follow at residues 72 to 101 and 102 to 130; these read RPIHRDEEECVECGACISVCPMNVYSFDET and WSLCVDEKKCIQCGMCIKMCPHGALKLGE. Residues Cys81, Cys84, Cys87, Cys91, Cys111, Cys114, Cys117, and Cys121 each contribute to the [4Fe-4S] cluster site.

As to quaternary structure, may form a complex with MA_1821. The cofactor is [4Fe-4S] cluster.

The protein operates within amino-acid biosynthesis. Its function is as follows. Required for O-acetylhomoserine sulfhydrylase (OAHS)-independent homocysteine (Hcy) biosynthesis. Together with MA_1821, catalyzes the condensation of sulfide with aspartate semialdehyde to generate homocysteine. May be involved in the reduction of the disulfide formed in MA_1821. The sequence is that of L-aspartate semialdehyde sulfurtransferase iron-sulfur subunit from Methanosarcina acetivorans (strain ATCC 35395 / DSM 2834 / JCM 12185 / C2A).